We begin with the raw amino-acid sequence, 338 residues long: UPF0284 protein TV0153 (338 aa).

The protein belongs to the UPF0284 family.

This is UPF0284 protein TV0153 from Thermoplasma volcanium (strain ATCC 51530 / DSM 4299 / JCM 9571 / NBRC 15438 / GSS1).